The following is a 439-amino-acid chain: Ribosomal protein uS12 methylthiotransferase RimO (439 aa).

In terms of domain architecture, MTTase N-terminal spans 3–115 (KKLHLISLGC…IDQMVRERQG (113 aa)). [4Fe-4S] cluster-binding residues include Cys-12, Cys-46, Cys-78, Cys-147, Cys-151, and Cys-154. A Radical SAM core domain is found at 133–362 (TGSSVHAYVK…DKIIQKQHRA (230 aa)).

Belongs to the methylthiotransferase family. RimO subfamily. [4Fe-4S] cluster serves as cofactor.

It localises to the cytoplasm. It catalyses the reaction L-aspartate(89)-[ribosomal protein uS12]-hydrogen + (sulfur carrier)-SH + AH2 + 2 S-adenosyl-L-methionine = 3-methylsulfanyl-L-aspartate(89)-[ribosomal protein uS12]-hydrogen + (sulfur carrier)-H + 5'-deoxyadenosine + L-methionine + A + S-adenosyl-L-homocysteine + 2 H(+). Functionally, catalyzes the methylthiolation of an aspartic acid residue of ribosomal protein uS12. This is Ribosomal protein uS12 methylthiotransferase RimO from Wolinella succinogenes (strain ATCC 29543 / DSM 1740 / CCUG 13145 / JCM 31913 / LMG 7466 / NCTC 11488 / FDC 602W) (Vibrio succinogenes).